Reading from the N-terminus, the 113-residue chain is MAQQAKAHVKMQRVSVSKAKLVANLFRGKDATLALGILHNTPQKSAKIFIKLLNSAIANATNNHGMDASKLFVKEIHVNEGPTLKRFQPRSQGRAYEILKRTSHFSIILEERA.

The protein belongs to the universal ribosomal protein uL22 family. Part of the 50S ribosomal subunit.

Its function is as follows. This protein binds specifically to 23S rRNA; its binding is stimulated by other ribosomal proteins, e.g. L4, L17, and L20. It is important during the early stages of 50S assembly. It makes multiple contacts with different domains of the 23S rRNA in the assembled 50S subunit and ribosome. Functionally, the globular domain of the protein is located near the polypeptide exit tunnel on the outside of the subunit, while an extended beta-hairpin is found that lines the wall of the exit tunnel in the center of the 70S ribosome. This Mycoplasmopsis synoviae (strain 53) (Mycoplasma synoviae) protein is Large ribosomal subunit protein uL22.